The following is a 62-amino-acid chain: Large ribosomal subunit protein bL28 (62 aa).

It belongs to the bacterial ribosomal protein bL28 family.

The chain is Large ribosomal subunit protein bL28 from Aster yellows witches'-broom phytoplasma (strain AYWB).